The primary structure comprises 132 residues: Agouti-signaling protein (132 aa).

The signal sequence occupies residues 1 to 22; sequence MDVTRLLLATLLVFLCFFTAYS. The N-linked (GlcNAc...) asparagine glycan is linked to N39. Residues 61–79 are compositionally biased toward basic and acidic residues; that stretch reads EISRKEAEKKRSSKKEASM. Positions 61-87 are disordered; sequence EISRKEAEKKRSSKKEASMKKVARPRT. 5 disulfide bridges follow: C93–C108, C100–C114, C107–C125, C111–C132, and C116–C123. The Agouti domain occupies 93–132; that stretch reads CVATRDSCKPPAPACCDPCASCQCRFFRSACSCRVLSLNC.

The protein localises to the secreted. Its function is as follows. Involved in the regulation of melanogenesis. The binding of ASP to MC1R precludes alpha-MSH initiated signaling and thus blocks production of cAMP, leading to a down-regulation of eumelanogenesis (brown/black pigment) and thus increasing synthesis of pheomelanin (yellow/red pigment). This Macaca fascicularis (Crab-eating macaque) protein is Agouti-signaling protein (ASIP).